A 263-amino-acid polypeptide reads, in one-letter code: Hydroxyacylglutathione hydrolase (263 aa).

Positions 55, 57, 59, 60, 117, 134, and 172 each coordinate Zn(2+).

Belongs to the metallo-beta-lactamase superfamily. Glyoxalase II family. As to quaternary structure, monomer. The cofactor is Zn(2+).

It catalyses the reaction an S-(2-hydroxyacyl)glutathione + H2O = a 2-hydroxy carboxylate + glutathione + H(+). The protein operates within secondary metabolite metabolism; methylglyoxal degradation; (R)-lactate from methylglyoxal: step 2/2. Functionally, thiolesterase that catalyzes the hydrolysis of S-D-lactoyl-glutathione to form glutathione and D-lactic acid. This chain is Hydroxyacylglutathione hydrolase, found in Shewanella baltica (strain OS195).